Consider the following 148-residue polypeptide: Large ribosomal subunit protein uL15 (148 aa).

Positions 1 to 40 (MADILQMHDLKPAPGANKDRIRVGRGEGSKGKTSGRGDKG) are enriched in basic and acidic residues. The disordered stretch occupies residues 1–47 (MADILQMHDLKPAPGANKDRIRVGRGEGSKGKTSGRGDKGTKKRYQV).

Belongs to the universal ribosomal protein uL15 family. As to quaternary structure, part of the 50S ribosomal subunit.

In terms of biological role, binds to the 23S rRNA. This chain is Large ribosomal subunit protein uL15, found in Bifidobacterium adolescentis (strain ATCC 15703 / DSM 20083 / NCTC 11814 / E194a).